We begin with the raw amino-acid sequence, 124 residues long: Small ribosomal subunit protein uS12 (124 aa).

The tract at residues 1–28 is disordered; sequence MPTISQLIGSERKRLTRKTKSPALKSCP. D89 carries the post-translational modification 3-methylthioaspartic acid. The segment at 104 to 124 is disordered; the sequence is TAGVKDRRQSRSKYGAKAPKD.

It belongs to the universal ribosomal protein uS12 family. Part of the 30S ribosomal subunit. Contacts proteins S8 and S17. May interact with IF1 in the 30S initiation complex.

With S4 and S5 plays an important role in translational accuracy. In terms of biological role, interacts with and stabilizes bases of the 16S rRNA that are involved in tRNA selection in the A site and with the mRNA backbone. Located at the interface of the 30S and 50S subunits, it traverses the body of the 30S subunit contacting proteins on the other side and probably holding the rRNA structure together. The combined cluster of proteins S8, S12 and S17 appears to hold together the shoulder and platform of the 30S subunit. This is Small ribosomal subunit protein uS12 from Prochlorococcus marinus (strain MIT 9312).